A 310-amino-acid polypeptide reads, in one-letter code: Protoheme IX farnesyltransferase 2 (310 aa).

9 helical membrane passes run 25–45 (PGIIFGNLISVAGGFLLAAKG), 49–69 (LVLMLASLVGLSLVVASGCAI), 98–118 (HVLLFGIAIGVLGFGILALFT), 121–141 (LALLFAAIGYVVYVGIYSLYM), 145–165 (SVYGTLVGSFSGAVPPVVGYC), 176–196 (VILLLMFSLWQMPHSYAIAIF), 222–242 (IVLYIAVFALVSTMLPLAGYT), 245–265 (AFMAVTCATSLWWLTMALKGY), and 277–297 (QVFGFSIITITALSVTMALDF).

The protein belongs to the UbiA prenyltransferase family. Protoheme IX farnesyltransferase subfamily.

Its subcellular location is the cell inner membrane. The enzyme catalyses heme b + (2E,6E)-farnesyl diphosphate + H2O = Fe(II)-heme o + diphosphate. It participates in porphyrin-containing compound metabolism; heme O biosynthesis; heme O from protoheme: step 1/1. Converts heme B (protoheme IX) to heme O by substitution of the vinyl group on carbon 2 of heme B porphyrin ring with a hydroxyethyl farnesyl side group. The protein is Protoheme IX farnesyltransferase 2 of Shewanella sp. (strain MR-7).